A 340-amino-acid polypeptide reads, in one-letter code: Uroporphyrinogen decarboxylase (340 aa).

Residues 23 to 27 (RQAGR), D72, Y147, T202, and H316 each bind substrate.

The protein belongs to the uroporphyrinogen decarboxylase family. Homodimer.

It localises to the cytoplasm. The enzyme catalyses uroporphyrinogen III + 4 H(+) = coproporphyrinogen III + 4 CO2. It participates in porphyrin-containing compound metabolism; protoporphyrin-IX biosynthesis; coproporphyrinogen-III from 5-aminolevulinate: step 4/4. Functionally, catalyzes the decarboxylation of four acetate groups of uroporphyrinogen-III to yield coproporphyrinogen-III. The sequence is that of Uroporphyrinogen decarboxylase from Geobacter metallireducens (strain ATCC 53774 / DSM 7210 / GS-15).